The primary structure comprises 167 residues: Large ribosomal subunit protein uL15 (167 aa).

A compositionally biased stretch (polar residues) spans 1–10; it reads MKLNQISDNP. The disordered stretch occupies residues 1–37; the sequence is MKLNQISDNPGATKDRMRVGRGIGSGKGKTAGRGVKG. Over residues 21 to 35 the composition is skewed to gly residues; that stretch reads RGIGSGKGKTAGRGV.

It belongs to the universal ribosomal protein uL15 family. In terms of assembly, part of the 50S ribosomal subunit.

Functionally, binds to the 23S rRNA. The protein is Large ribosomal subunit protein uL15 of Methylobacterium radiotolerans (strain ATCC 27329 / DSM 1819 / JCM 2831 / NBRC 15690 / NCIMB 10815 / 0-1).